The primary structure comprises 187 residues: Ribosome maturation factor RimP (187 aa).

It belongs to the RimP family.

The protein localises to the cytoplasm. Required for maturation of 30S ribosomal subunits. The chain is Ribosome maturation factor RimP from Phenylobacterium zucineum (strain HLK1).